The primary structure comprises 833 residues: Major vault protein (833 aa).

7 MVP repeats span residues 54–118, 119–170, 171–223, 224–278, 280–328, 329–380, and 381–433; these read RHYC…QLIP, PNTG…TVIY, PNTA…TMLS, DLKA…VSLS, KEYV…LVVG, KEEA…MALD, and KNEG…SIQT.

In terms of assembly, the vault ribonucleoprotein particle is a huge (400 A x 670 A) cage structure of 12.9 MDa. It consists of a dimer of half-vaults, with each half-vault comprising 39 identical major vault protein (MVP) chains, PARP4 and one or more vault RNAs (vRNAs).

The protein resides in the cytoplasm. The protein localises to the nucleus. Required for normal vault structure. Vaults are multi-subunit structures that may act as scaffolds for proteins involved in signal transduction. Vaults may also play a role in nucleo-cytoplasmic transport. In Leishmania infantum, this protein is Major vault protein.